The chain runs to 156 residues: Large ribosomal subunit protein uL23 (156 aa).

The span at 1-19 (MAPKAKKEAPAPPKAEAKA) shows a compositional bias: basic and acidic residues. A disordered region spans residues 1-67 (MAPKAKKEAP…PKYPRKSAPR (67 aa)). A2 is modified (n,N,N-trimethylalanine). K14 participates in a covalent cross-link: Glycyl lysine isopeptide (Lys-Gly) (interchain with G-Cter in SUMO2). Basic residues predominate over residues 20 to 67 (KALKAKKAVLKGVHSHKKKKIRTSPTFRRPKTLRLRRQPKYPRKSAPR). A beta-like import receptor binding (BIB) domain region spans residues 32–74 (VHSHKKKKIRTSPTFRRPKTLRLRRQPKYPRKSAPRRNKLDHY). Residue R41 is modified to Citrulline. Residue S43 is modified to Phosphoserine. T45 bears the Phosphothreonine mark. Residue K70 is modified to N6-acetyllysine.

It belongs to the universal ribosomal protein uL23 family. In terms of assembly, component of the large ribosomal subunit. Interacts with LYAR and GNL2. Interacts with MDM2; this interaction may promote MDM2-mediated p53/TP53 polyubiquitination. Directly interacts (via BIB domain) with IPO5, IPO7, KPNB1 and TNPO1; these interactions are involved in RPL23A nuclear import for the assembly of ribosomal subunits. Interacts with IPO8. In terms of processing, N-terminus is methylated by METTL11A/NTM1. Post-translationally, citrullinated by PADI4.

It is found in the cytoplasm. It localises to the nucleus. Component of the large ribosomal subunit. The ribosome is a large ribonucleoprotein complex responsible for the synthesis of proteins in the cell. Binds a specific region on the 26S rRNA. May promote p53/TP53 degradation possibly through the stimulation of MDM2-mediated TP53 polyubiquitination. This chain is Large ribosomal subunit protein uL23 (RPL23A), found in Bos taurus (Bovine).